A 173-amino-acid polypeptide reads, in one-letter code: Globin, cuticular isoform (173 aa).

Positions methionine 1–alanine 16 are cleaved as a signal peptide. Positions methionine 17 to glutamate 166 constitute a Globin domain. Heme b is bound at residue histidine 113.

Belongs to the globin family. Expressed only by adult nematodes in the gut.

It is found in the secreted. Its subcellular location is the extracellular space. The polypeptide is Globin, cuticular isoform (GLBC) (Nippostrongylus brasiliensis (Rat hookworm)).